A 96-amino-acid polypeptide reads, in one-letter code: Large ribosomal subunit protein eL14 (96 aa).

This sequence belongs to the eukaryotic ribosomal protein eL14 family.

This is Large ribosomal subunit protein eL14 from Saccharolobus islandicus (strain Y.N.15.51 / Yellowstone #2) (Sulfolobus islandicus).